The chain runs to 516 residues: MDKDNQALDELPMLTGSKHANKRLFAAFMIFGLLNNVLYVIILSAALDLVSADTPKGVVALFNIFPALITKVVWPLLSNGKIRYTRRVGFCTICSWFGIITIALSSSLSPRLLGISLASLSSGMGELTFLQLTTTLPTEATSKTALGAWSSGTGFAGVAGAGIWWLLRGLGVKGGLGLSSFLPLFFPITYKYILPPFSHLEASSDSSPYQRLPMSSSLSNNNNFRPPAILISVPSSEYVPQHTPLLSSGFIDRDRDRNRDGEELTDGDKRLMGMRASRLTTQEKMKLLRPLVVRYMLPLCAVYVEEYVINSGVAPTLVFPLPTYGLWSWLFKSPRDYYPFWSLTYQTFVFLSRSSLSLGLPPIPKRLLPLPAIIQFLVLSLLFLQAKTFFFSSPAYTPPADGDGGVDRSITIVFLLICLEGLCGGSGYVNTFYHVGREGSVSENYDADGDNEMGGDRRTVNVTEMEKKAMEREFRIGAVGAADSTGILFASLISMPLEIALCRSQVDQGRTMCREL.

8 consecutive transmembrane segments (helical) span residues leucine 24–serine 44, glycine 57–leucine 77, valine 88–leucine 108, leucine 112–leucine 132, leucine 146–leucine 166, glycine 169–threonine 189, proline 371–phenylalanine 391, and serine 409–valine 429.

It belongs to the battenin family.

It localises to the vacuole membrane. Functionally, involved in vacuolar transport and vacuole pH homeostasis. Also required for cytokinesis. The polypeptide is Protein BTN1 (BTN1) (Cryptococcus neoformans var. neoformans serotype D (strain JEC21 / ATCC MYA-565) (Filobasidiella neoformans)).